The following is a 208-amino-acid chain: Large ribosomal subunit protein bL25 (208 aa).

The disordered stretch occupies residues 1 to 21 (MSNEFSLNAEKRDVQGKGASR).

This sequence belongs to the bacterial ribosomal protein bL25 family. CTC subfamily. In terms of assembly, part of the 50S ribosomal subunit; part of the 5S rRNA/L5/L18/L25 subcomplex. Contacts the 5S rRNA. Binds to the 5S rRNA independently of L5 and L18.

Its function is as follows. This is one of the proteins that binds to the 5S RNA in the ribosome where it forms part of the central protuberance. The protein is Large ribosomal subunit protein bL25 of Hahella chejuensis (strain KCTC 2396).